Reading from the N-terminus, the 393-residue chain is Phosphoglycerate kinase (393 aa).

Substrate is bound by residues 21–23 (DMN), Arg-36, 59–62 (HLGR), Arg-114, and Arg-147. ATP contacts are provided by residues Lys-198, Glu-320, and 346 to 349 (GGDT).

The protein belongs to the phosphoglycerate kinase family. In terms of assembly, monomer.

The protein localises to the cytoplasm. It carries out the reaction (2R)-3-phosphoglycerate + ATP = (2R)-3-phospho-glyceroyl phosphate + ADP. Its pathway is carbohydrate degradation; glycolysis; pyruvate from D-glyceraldehyde 3-phosphate: step 2/5. The protein is Phosphoglycerate kinase of Thiobacillus denitrificans (strain ATCC 25259 / T1).